A 363-amino-acid chain; its full sequence is Teichoic acids export ATP-binding protein TagH (363 aa).

Residues 27 to 246 (KHFFNIGNVD…YRKFSKDFKA (220 aa)) enclose the ABC transporter domain. Residue 60–67 (GINGSGKS) coordinates ATP. The unknown stretch occupies residues 247 to 363 (QTAAYRKKYQ…KSQSVLFNSK (117 aa)).

Belongs to the ABC transporter superfamily. Teichoic acids exporter (TC 3.A.1.104.1) family. As to quaternary structure, the complex is composed of two ATP-binding proteins (TagH) and two transmembrane proteins (TagG).

The protein localises to the cell membrane. The enzyme catalyses ATP + H2O + teichoic acidSide 1 = ADP + phosphate + teichoic acidSide 2.. Functionally, part of the ABC transporter complex TagGH involved in teichoic acids export. Responsible for energy coupling to the transport system. This Lactiplantibacillus plantarum (strain ATCC BAA-793 / NCIMB 8826 / WCFS1) (Lactobacillus plantarum) protein is Teichoic acids export ATP-binding protein TagH.